A 144-amino-acid chain; its full sequence is Large ribosomal subunit protein eL27 (144 aa).

In terms of domain architecture, KOW spans I6–H43.

The protein belongs to the eukaryotic ribosomal protein eL27 family.

The sequence is that of Large ribosomal subunit protein eL27 (rpl27) from Dictyostelium discoideum (Social amoeba).